Here is a 362-residue protein sequence, read N- to C-terminus: Holliday junction branch migration complex subunit RuvB (362 aa).

The large ATPase domain (RuvB-L) stretch occupies residues 4 to 186 (PDRPQRLVEQ…FGIPLRMQFY (183 aa)). ATP is bound by residues isoleucine 25, arginine 26, glycine 67, lysine 70, threonine 71, threonine 72, 133-135 (EDF), arginine 176, tyrosine 186, and arginine 223. Threonine 71 is a binding site for Mg(2+). The small ATPAse domain (RuvB-S) stretch occupies residues 187–257 (EPEELQLIVA…AAGGALTRLE (71 aa)). Positions 260–362 (RLGFDAMDRR…GTPEGEGEDV (103 aa)) are head domain (RuvB-H). Residues arginine 296, arginine 315, and arginine 320 each contribute to the DNA site.

The protein belongs to the RuvB family. In terms of assembly, homohexamer. Forms an RuvA(8)-RuvB(12)-Holliday junction (HJ) complex. HJ DNA is sandwiched between 2 RuvA tetramers; dsDNA enters through RuvA and exits via RuvB. An RuvB hexamer assembles on each DNA strand where it exits the tetramer. Each RuvB hexamer is contacted by two RuvA subunits (via domain III) on 2 adjacent RuvB subunits; this complex drives branch migration. In the full resolvosome a probable DNA-RuvA(4)-RuvB(12)-RuvC(2) complex forms which resolves the HJ.

It is found in the cytoplasm. It catalyses the reaction ATP + H2O = ADP + phosphate + H(+). The RuvA-RuvB-RuvC complex processes Holliday junction (HJ) DNA during genetic recombination and DNA repair, while the RuvA-RuvB complex plays an important role in the rescue of blocked DNA replication forks via replication fork reversal (RFR). RuvA specifically binds to HJ cruciform DNA, conferring on it an open structure. The RuvB hexamer acts as an ATP-dependent pump, pulling dsDNA into and through the RuvAB complex. RuvB forms 2 homohexamers on either side of HJ DNA bound by 1 or 2 RuvA tetramers; 4 subunits per hexamer contact DNA at a time. Coordinated motions by a converter formed by DNA-disengaged RuvB subunits stimulates ATP hydrolysis and nucleotide exchange. Immobilization of the converter enables RuvB to convert the ATP-contained energy into a lever motion, pulling 2 nucleotides of DNA out of the RuvA tetramer per ATP hydrolyzed, thus driving DNA branch migration. The RuvB motors rotate together with the DNA substrate, which together with the progressing nucleotide cycle form the mechanistic basis for DNA recombination by continuous HJ branch migration. Branch migration allows RuvC to scan DNA until it finds its consensus sequence, where it cleaves and resolves cruciform DNA. This is Holliday junction branch migration complex subunit RuvB from Rhodospirillum centenum (strain ATCC 51521 / SW).